Here is a 145-residue protein sequence, read N- to C-terminus: Large ribosomal subunit protein uL13 (145 aa).

This sequence belongs to the universal ribosomal protein uL13 family. As to quaternary structure, part of the 50S ribosomal subunit.

Its function is as follows. This protein is one of the early assembly proteins of the 50S ribosomal subunit, although it is not seen to bind rRNA by itself. It is important during the early stages of 50S assembly. The chain is Large ribosomal subunit protein uL13 from Geobacillus sp. (strain WCH70).